A 127-amino-acid polypeptide reads, in one-letter code: Gonadotropin subunit beta-1 (127 aa).

Residues 1–22 (MHLAVTALCLTLAPVLARASTS) form the signal peptide. Intrachain disulfides connect C23–C71, C37–C86, C40–C124, C48–C102, C52–C104, and C107–C114. 2 N-linked (GlcNAc...) asparagine glycosylation sites follow: N27 and N44.

It belongs to the glycoprotein hormones subunit beta family. Heterodimer of an alpha and a beta chain.

The protein resides in the secreted. Involved in gametogenesis and steroidogenesis. This Anguilla japonica (Japanese eel) protein is Gonadotropin subunit beta-1 (cgba).